Consider the following 200-residue polypeptide: Trem-like transcript 4 protein (200 aa).

A signal peptide spans 1–25 (MAWGGVHTCCFHLCCCCSWPQGAVP). Positions 26–126 (EELHKHPGQT…NIITVLRNIS (101 aa)) constitute an Ig-like V-type domain. The cysteines at positions 40 and 109 are disulfide-linked. An N-linked (GlcNAc...) asparagine glycan is attached at Asn93.

The protein localises to the secreted. Positively regulates Toll-like receptor TLR7 signaling in macrophages. This Homo sapiens (Human) protein is Trem-like transcript 4 protein (TREML4).